The chain runs to 76 residues: Horsegram inhibitor 1 (76 aa).

7 disulfide bridges follow: cysteine 16–cysteine 70, cysteine 17–cysteine 32, cysteine 20–cysteine 66, cysteine 22–cysteine 30, cysteine 40–cysteine 47, cysteine 44–cysteine 59, and cysteine 49–cysteine 57.

This sequence belongs to the Bowman-Birk serine protease inhibitor family. In terms of assembly, HGI-III exists in a state of equilibrium between monomer, homodimer and trimer, with homodimer being the predominant form. The homodimer is stabilized by the non-covalent interaction between Lys-24 of one subunit and Asp-76 of the other subunit. The homodimer is more thermostable than the monomer. HGGI-I, HGGI-II and HGGI-III exist as monomers. HGGI-I, HGGI-II and HGGI-III are produced by proteolysis of the N- and C-termini of HGI-III.

Functionally, inhibitors of trypsin and chymotrypsin. HGGI-III has a higher activity than HGGI-I or HGGI-II. This chain is Horsegram inhibitor 1, found in Vigna unguiculata subsp. cylindrica (Horse gram).